The primary structure comprises 196 residues: Late protein I196L (196 aa).

2 tandem repeats follow at residues 28–48 (SNYL…PTTS) and 49–70 (SNYL…TTTS). The stretch at 71–92 (SNYLTSAIPNIISDKEDDTPFS) is one 3; approximate repeat.

Belongs to the asfivirus I196L family.

The protein is Late protein I196L of African swine fever virus (strain Badajoz 1971 Vero-adapted) (Ba71V).